We begin with the raw amino-acid sequence, 367 residues long: Chorismate synthase (367 aa).

Residue Arg48 participates in NADP(+) binding. FMN contacts are provided by residues 125-127, 243-244, Gly283, 298-302, and Arg324; these read RSS, NA, and KPTSS.

This sequence belongs to the chorismate synthase family. As to quaternary structure, homotetramer. It depends on FMNH2 as a cofactor.

It carries out the reaction 5-O-(1-carboxyvinyl)-3-phosphoshikimate = chorismate + phosphate. It participates in metabolic intermediate biosynthesis; chorismate biosynthesis; chorismate from D-erythrose 4-phosphate and phosphoenolpyruvate: step 7/7. Catalyzes the anti-1,4-elimination of the C-3 phosphate and the C-6 proR hydrogen from 5-enolpyruvylshikimate-3-phosphate (EPSP) to yield chorismate, which is the branch point compound that serves as the starting substrate for the three terminal pathways of aromatic amino acid biosynthesis. This reaction introduces a second double bond into the aromatic ring system. The chain is Chorismate synthase from Psychrobacter cryohalolentis (strain ATCC BAA-1226 / DSM 17306 / VKM B-2378 / K5).